We begin with the raw amino-acid sequence, 1451 residues long: Protein clueless (1451 aa).

2 disordered regions span residues 1-101 and 264-286; these read MALE…EYAA and KKTR…VSEP. The span at 9-53 shows a compositional bias: low complexity; it reads NSNATATGDATATKASSKAKENNNTAGGKKNLNPIPSQQNSNQNL. Residues 66–75 show a composition bias toward basic residues; that stretch reads GKKKGKKNRN. The residue at position 270 (Ser270) is a Phosphoserine. The 243-residue stretch at 424 to 666 folds into the Clu domain; that stretch reads RAEDAFSSKL…RTFPPDVNFL (243 aa). 3 disordered regions span residues 722-775, 961-1012, and 1413-1451; these read AKKQ…ESKT, AVSS…SSVS, and ANNN…ATSS. A compositionally biased stretch (basic and acidic residues) spans 748–758; that stretch reads GADKTDVKEEK. Residues 969 to 984 show a composition bias toward basic residues; sequence KKRGNGGKHNKHKSSK. A compositionally biased stretch (low complexity) spans 989–1010; it reads QQQQQTTGNQNGSSSGTSNGSS.

It belongs to the CLU family.

It is found in the cytoplasm. Its function is as follows. mRNA-binding protein involved in proper cytoplasmic distribution of mitochondria. This chain is Protein clueless, found in Drosophila yakuba (Fruit fly).